Consider the following 483-residue polypeptide: Glutamyl-tRNA(Gln) amidotransferase subunit A (483 aa).

Residues Lys76 and Ser151 each act as charge relay system in the active site. Catalysis depends on Ser175, which acts as the Acyl-ester intermediate.

It belongs to the amidase family. GatA subfamily. Heterotrimer of A, B and C subunits.

The catalysed reaction is L-glutamyl-tRNA(Gln) + L-glutamine + ATP + H2O = L-glutaminyl-tRNA(Gln) + L-glutamate + ADP + phosphate + H(+). Functionally, allows the formation of correctly charged Gln-tRNA(Gln) through the transamidation of misacylated Glu-tRNA(Gln) in organisms which lack glutaminyl-tRNA synthetase. The reaction takes place in the presence of glutamine and ATP through an activated gamma-phospho-Glu-tRNA(Gln). The chain is Glutamyl-tRNA(Gln) amidotransferase subunit A from Pseudomonas putida (strain ATCC 47054 / DSM 6125 / CFBP 8728 / NCIMB 11950 / KT2440).